Here is a 258-residue protein sequence, read N- to C-terminus: Trypsin eta (258 aa).

The N-terminal stretch at 1-22 is a signal peptide; the sequence is MNKVILRILALLFLLGIGAVSA. A propeptide spans 23-27 (activation peptide); that stretch reads QPDGR. Residues 28–258 enclose the Peptidase S1 domain; sequence IVGGADTTNY…YFKDWIASRV (231 aa). Cysteines 59 and 75 form a disulfide. Residues H74 and D120 each act as charge relay system in the active site. Intrachain disulfides connect C185-C200 and C211-C235. The active-site Charge relay system is the S215.

The protein belongs to the peptidase S1 family.

Its subcellular location is the secreted. The protein resides in the extracellular space. It carries out the reaction Preferential cleavage: Arg-|-Xaa, Lys-|-Xaa.. The sequence is that of Trypsin eta (etaTry) from Drosophila erecta (Fruit fly).